The primary structure comprises 201 residues: FMN reductase (NADH) RutF 1 (201 aa).

Positions 167–195 are enriched in low complexity; sequence PRAPRSGSAPAEPARAARAVGARPAEGPA. A disordered region spans residues 167 to 201; the sequence is PRAPRSGSAPAEPARAARAVGARPAEGPALALRSA.

This sequence belongs to the non-flavoprotein flavin reductase family. RutF subfamily.

The catalysed reaction is FMNH2 + NAD(+) = FMN + NADH + 2 H(+). In terms of biological role, catalyzes the reduction of FMN to FMNH2 which is used to reduce pyrimidine by RutA via the Rut pathway. The chain is FMN reductase (NADH) RutF 1 from Methylorubrum extorquens (strain CM4 / NCIMB 13688) (Methylobacterium extorquens).